The primary structure comprises 71 residues: Large ribosomal subunit protein bL31 (71 aa).

Zn(2+) contacts are provided by cysteine 16, cysteine 18, cysteine 38, and cysteine 41.

Belongs to the bacterial ribosomal protein bL31 family. Type A subfamily. Part of the 50S ribosomal subunit. Zn(2+) is required as a cofactor.

In terms of biological role, binds the 23S rRNA. In Francisella tularensis subsp. novicida (strain U112), this protein is Large ribosomal subunit protein bL31.